The chain runs to 200 residues: Large ribosomal subunit protein uL4 (200 aa).

The segment at 38 to 68 is disordered; sequence GRQGSKQQKTRSDVRGGGKRPWRQKGTGRAR. The span at 54–65 shows a compositional bias: basic residues; the sequence is GGKRPWRQKGTG.

Belongs to the universal ribosomal protein uL4 family. As to quaternary structure, part of the 50S ribosomal subunit.

In terms of biological role, one of the primary rRNA binding proteins, this protein initially binds near the 5'-end of the 23S rRNA. It is important during the early stages of 50S assembly. It makes multiple contacts with different domains of the 23S rRNA in the assembled 50S subunit and ribosome. Forms part of the polypeptide exit tunnel. The sequence is that of Large ribosomal subunit protein uL4 from Pseudomonas savastanoi pv. phaseolicola (strain 1448A / Race 6) (Pseudomonas syringae pv. phaseolicola (strain 1448A / Race 6)).